The chain runs to 24 residues: Carboxypeptidase 1 (24 aa).

N-linked (GlcNAc...) asparagine glycosylation is found at asparagine 3 and asparagine 11.

This sequence belongs to the peptidase S10 family. Monomer. Post-translationally, contains both N- and O-linked sugar chains. The N-linked oligosaccharides are unique structures of Man(10)GlcNAc(2) and Man(11)GlcNAc(2). Deglycosylation does neither affect catalytic activity, pH, thermal stability, or resistance to proteolysis of the enzyme.

The protein resides in the secreted. With respect to regulation, inhibited by DFP. Removes acidic, neutral and basic amino acids as well as proline from the C-terminal position. Digests preferentially peptides containing a hydrophobic residue in P1' position, as well as arginine, lysine or phenylalanine in P1 position of ester substrate. Catalyzes also peptide synthesis. This Aspergillus niger protein is Carboxypeptidase 1.